The chain runs to 1782 residues: MRPVDFTPSSESPTAEKGMKVVYFGNELPQDGIQGICRRLHTYTKDRRYPLLARFIEESTWAVHDEVRQLHAAQKALVSPFESVLHLAEQPELCRGPLCGSIEGVLLCVIQLGTFIGYYEDSPNEYTFDSANTYLTGLGLGLLASTAVSLSPTLADLPLAGAEVVRVAFRLGVLVADVSQNLQPADATGERDSWAYVIPNVAPKEAEEELAVIHTRENTPEASRIFISAISRTSVTISGPPARLRRLFRMSDFFRDRTFVALPVYGGLCHAKHIYNSQHARSVVQGPSIAALDTRFIARYPILSTGSGEPFPTATTATELFEHVMTEILTQAIEWENVIQGVVERAKLLSVSEVQVQVFRNSHPVHDLLSALETSLREGVEVAIKDLGPWITRTRDEERPPPRGTAQSKIAIVGMSCRMPSGATDTEKFWDILEQGLDVHRKIPPDRFDVDSHYDPAGKRVNASHTPYGCFIDEPGLFDAPFFNMSPREAQQTDPMQRLAIVTAYEALERAGYVANRTRSSNKHRMGTFYGQASDDYREVNSAQEISTYFIPGGCRAFGPGRINYFFKLWGPSFSIDTACSSSLATIQAACTALWNGDTDTVVAGGMNVLTNSDAFAGLSHGHFLTKTPNACKTWDCEADGYCRADGVASIVMKRLEDAEADNDNILGVILGAATNHSAEAISITHPHAGAQSCLSRQVLRSAGIDPMDVSYVEMHGTGTQAGDAEEIKSVSDVFAPAVKRRSSQQPVFIGAVKANVGHGEAVAGVTALVKVLLMFQKEAIPPHVGIKNSINPGFPKDLDQRNLRIPYEKKPWPRRPGRKRIAMVNNFSAAGGNSTLAIEEGPLRPKPAGAIDPRSSHLVTVSAKSKISLKGNLERLLSFLDAHPDVALSDLAYTTTARRHHHNHRVAVATSDIADLKAQLCKTLESDSVNTLQPISATGPPPIAFAFTGQGSSYKSWDLQLFQHSPYFRSQILHLDTLAQGQGFPSFVPAIDGSYPRDHAHCPVITQLALVCTEIALAKYWVSLGVTPDVVVGHSLGEYAALHIAGVLSASDAIFLVGQRACLLQERCQPSSHQMMAVRASLEQIEQFAGSLPYEIACVNGPREMVLSGTREEMAAVARLLEAEGFKCIVLEVAFAFHSAQMDPILDEFEALAASGVVFQAPNLPVISPLLSKVVFDEHTIDSVYMRRATRETVHFLSAMKMAHKISTIDDATVWVEIGPHPVCVNFVRSSLPSTSVTVPSFRRGEDNWVTLTSSLGILHCAGVPVDWNEFHQPFERALRLLDLPTYSWNEKTYWIQYQGNWALTKGNTFYDDEAPQTKALAGLASELRTSTVQQIIHEQYDGAAGSVVMQSDLMQPDFLAAAYGHKMNGRGVVTSSIHADIAFTLGEYLYKKLNPNQEPHMNIANLEVVKALVAQENTKSPQLIQVSASTDNIRSRQAHLKWHNVINGSIEEPFASATVYYEEASDWLASWRPATHLVQGRIHALEQLAEDGVANRFTRRMAYGLFASSLVDYADKYRGMQSVVLHELEAFADVVLTTEKGGTWTVPPYFIDSVAHLAGFIMNVSDANDTNANFCVTPGWSSMRFAAPLLPGSKYRSYVKMIPTVEDNNIYLGDVYILQDETIVGMVGGIKFRRYPRILLNRFFSAPDADARKSTPATSAPAPAPPAGSEALQPKAAPASTPAAPASADAPTTNGVKAAAEPDANSTAAKAIALVATEAGLGLSDLKDSASFSSLGIDSLMSLVISEKFRETLGVTVTGSLFLEYPTVGDLKSWLLEYYS.

Residues 41–270 (HTYTKDRRYP…ALPVYGGLCH (230 aa)) are N-terminal acylcarrier protein transacylase domain (SAT). The Ketosynthase family 3 (KS3) domain maps to 407–841 (QSKIAIVGMS…GGNSTLAIEE (435 aa)). Active-site for beta-ketoacyl synthase activity residues include cysteine 580, histidine 716, and histidine 759. Positions 946–1266 (FAFTGQGSSY…LGILHCAGVP (321 aa)) are malonyl-CoA:ACP transacylase (MAT) domain. The segment at 1331-1648 (TSTVQQIIHE…RILLNRFFSA (318 aa)) is product template (PT) domain. The interval 1335-1468 (QQIIHEQYDG…ATVYYEEASD (134 aa)) is N-terminal hotdog fold. Positions 1335–1643 (QQIIHEQYDG…FRRYPRILLN (309 aa)) constitute a PKS/mFAS DH domain. Histidine 1367 serves as the catalytic Proton acceptor; for dehydratase activity. The interval 1495-1643 (VANRFTRRMA…FRRYPRILLN (149 aa)) is C-terminal hotdog fold. The Proton donor; for dehydratase activity role is filled by aspartate 1554. Residues 1653-1703 (ARKSTPATSAPAPAPPAGSEALQPKAAPASTPAAPASADAPTTNGVKAAAE) form a disordered region. Residues 1678–1695 (AAPASTPAAPASADAPTT) show a composition bias toward low complexity. The Carrier domain maps to 1704–1781 (PDANSTAAKA…DLKSWLLEYY (78 aa)). At serine 1741 the chain carries O-(pantetheine 4'-phosphoryl)serine.

As to expression, specifically expressed in conidia.

The enzyme catalyses holo-[ACP] + 8 malonyl-CoA + 8 H(+) = atrochrysone carboxyl-[ACP] + 8 CO2 + 8 CoA + 2 H2O. It functions in the pathway secondary metabolite biosynthesis. In terms of biological role, non-reducing polyketide synthase; part of the gene cluster that mediates the biosynthesis of trypacidin, a mycotoxin with antiprotozoal activity and that plays a role in the infection process. The pathway begins with the synthesis of atrochrysone thioester by the polyketide synthase (PKS) tpcC. The atrochrysone carboxyl ACP thioesterase tpcB then breaks the thioester bond and releases the atrochrysone carboxylic acid from tpcC. The decarboxylase tpcK converts atrochrysone carboxylic acid to atrochrysone which is further reduced into emodin anthrone. The next step is performed by the emodin anthrone oxygenase tpcL that catalyzes the oxidation of emodin anthrone to emodin. Emodin O-methyltransferase encoded by tpcA catalyzes methylation of the 8-hydroxy group of emodin to form questin. Ring cleavage of questin by questin oxidase tpcI leads to desmethylsulochrin via several intermediates including questin epoxide. Another methylation step catalyzed by tpcM leads to the formation of sulochrin which is further converted to monomethylsulfochrin by tpcH. Finally, the tpcJ catalyzes the conversion of monomethylsulfochrin to trypacidin. Trypacidin is toxic for human pulmonary and bronchial epithelial cells by initiating the intracellular formation of nitric oxide (NO) and hydrogen peroxide (H(2)O(2)), thus triggering host necrotic cell death. The trypacidin pathway is also able to produce endocrocin via a distinct route from the endocrocin Enc pathway. This chain is Atrochrysone carboxylic acid synthase, found in Aspergillus fumigatus (strain ATCC MYA-4609 / CBS 101355 / FGSC A1100 / Af293) (Neosartorya fumigata).